The chain runs to 510 residues: MTSSLDDIEPTAYNNMEADEEYCRRNDIHDLSSVVGDAVSQGVPDMDGQTTDSSKDPEPNSEDKKAFPPSSGSFFSPNLQGQRKKVLLKFVFTNCLLAIICFTMFVLFWGALYDTSKYLHKVKLLVVIQEPPVVILDNNSSMVVPSISYALPTFINKIPCDWDIYNSPTFQAKFDVNTPQQVNDKVVDLVYDEKYWFAINIKPNATETLFESLINDTAPLFNSTLFNQVVYETGRDPTNLKSTILPVAQTIEEYYHTFYTLNYLPPLLTNITQVYRYALTNNARYIAAAGKYNYEYYDHRPFTDRILLAPTQIGVVYCLLLTFFQFLLYGPLHVEMAKVLRPANGLIYRIAMSWFTFFFASLFFCTTTAIFQVDFTKSFGRGGFVVYWMSTWLFMLAAGGANENAVMLVITLGPQYLGFWILSFVILNIAPSFFPLALNNNVYRYGYMMPVHNVIDIYRVIFFDVTRRKMGRNYGILVALIALNTALLPFVGKYASRKLKQKALVAAKQS.

The Lumenal segment spans residues Met-1–Lys-89. Positions Ala-38–Ser-76 are disordered. Over residues Ser-53–Ala-66 the composition is skewed to basic and acidic residues. The span at Phe-67–Ser-76 shows a compositional bias: low complexity. A helical membrane pass occupies residues Phe-90–Gly-110. Residues Ala-111–Lys-123 are Cytoplasmic-facing. The chain crosses the membrane as a helical span at residues Leu-124 to Val-144. At Pro-145–Gln-312 the chain is on the lumenal side. Residues Ile-313–His-333 form a helical membrane-spanning segment. The Cytoplasmic portion of the chain corresponds to Val-334–Arg-349. Residues Ile-350–Ile-370 traverse the membrane as a helical segment. Residues Phe-371 to Arg-381 lie on the Lumenal side of the membrane. The chain crosses the membrane as a helical span at residues Gly-382–Asn-402. Over Glu-403–Tyr-416 the chain is Cytoplasmic. Residues Leu-417 to Ala-437 traverse the membrane as a helical segment. Over Leu-438–Tyr-474 the chain is Lumenal. The helical transmembrane segment at Gly-475–Ala-495 threads the bilayer. Over Ser-496–Ser-510 the chain is Cytoplasmic.

It to yeast SNG1.

The protein resides in the endoplasmic reticulum membrane. This is an uncharacterized protein from Saccharomyces cerevisiae (strain ATCC 204508 / S288c) (Baker's yeast).